Consider the following 433-residue polypeptide: 5-methylthioadenosine/S-adenosylhomocysteine deaminase (433 aa).

Zn(2+) is bound by residues His67 and His69. Residues Glu96, Arg148, and His186 each coordinate substrate. His213 is a Zn(2+) binding site. Substrate is bound by residues Glu216 and Asp301. Residue Asp301 participates in Zn(2+) binding.

It belongs to the metallo-dependent hydrolases superfamily. MTA/SAH deaminase family. It depends on Zn(2+) as a cofactor.

It carries out the reaction S-adenosyl-L-homocysteine + H2O + H(+) = S-inosyl-L-homocysteine + NH4(+). It catalyses the reaction S-methyl-5'-thioadenosine + H2O + H(+) = S-methyl-5'-thioinosine + NH4(+). In terms of biological role, catalyzes the deamination of 5-methylthioadenosine and S-adenosyl-L-homocysteine into 5-methylthioinosine and S-inosyl-L-homocysteine, respectively. Is also able to deaminate adenosine. The protein is 5-methylthioadenosine/S-adenosylhomocysteine deaminase of Desulforamulus reducens (strain ATCC BAA-1160 / DSM 100696 / MI-1) (Desulfotomaculum reducens).